We begin with the raw amino-acid sequence, 457 residues long: MALWGGRFTQAADQRFKQFNDSLRFDYRLAEQDIVGSVAWSKALVTVGVLSAAEQQQLEEALNVLLEEVRANPQQILASDAEDIHSWVEGKLIDKVGQLGKKLHTGRSRNDQVATDLKLWCKDTVVELLSANRQLQSALVETAQHNQDAVMPGYTHLQRAQPVTFAHWCLAYVEMLARDESRLQDALKRLDVSPLGCGALAGTAYEIDREQLAGWLGFASATRNSLDSVSDRDHVLELLSDASIGMVHLSRFAEDLIFFNSGEANFVELSDRVTSGSSLMPQKKNPDALELIRGKCGRVQGALTGMMMTLKGLPLAYNKDMQEDKEGLFDALDTWLDCLHMATLVLDGIQVKRPRCAEAAQQGYANATELADYLVAKGVPFREAHHIVGEAVVEAIAQGKPLEALPLVDLQKFSPVIADDVYPILSLQSCLDKRAAKGGVSPQQVAQAISDAKARLS.

Belongs to the lyase 1 family. Argininosuccinate lyase subfamily.

Its subcellular location is the cytoplasm. The catalysed reaction is 2-(N(omega)-L-arginino)succinate = fumarate + L-arginine. Its pathway is amino-acid biosynthesis; L-arginine biosynthesis; L-arginine from L-ornithine and carbamoyl phosphate: step 3/3. The chain is Argininosuccinate lyase from Klebsiella pneumoniae (strain 342).